Reading from the N-terminus, the 33-residue chain is RSGRGECRRQCLRRHEGQPWETQECMRRCRRRG.

Predominantly in the embryo portion of the kernel.

Its subcellular location is the secreted. In terms of biological role, inhibitor of both bacterial and fungal growth in vitro. This Zea mays (Maize) protein is Antimicrobial peptide MBP-1.